The following is a 347-amino-acid chain: MNEPLKPRVTFDDVSPQEPQPQLRAGLAFDEQSSTPFSPISREEEVPEEGAAEEAISAALRPKRSLWRRMVMAGVALFGISALAQGVQSLHNAWVQQDWIALGGITAGSLIVAAGVGSLAVEWRRLYRLRERAEERDMARDLLHSHGVERGREFCEKLARQAGLDSGHPAIQRWQASLHETHNDREVLELYARLVQPVLDTQARREISRSAAESTLMIAVSPLALVDMAFIAWRNLRLINRIAALYGIELGYFSRIRLFRLVLINIAFAGASELVREIGMDWMSQDLAARLSTRAAQGIGAGLLTARLGIKAMELCRPLPWLDDKPRLGDFRRELIGQVKETLQKGR.

The span at 1–11 shows a compositional bias: basic and acidic residues; that stretch reads MNEPLKPRVTF. The tract at residues 1-48 is disordered; that stretch reads MNEPLKPRVTFDDVSPQEPQPQLRAGLAFDEQSSTPFSPISREEEVPE. 3 helical membrane passes run 70-90, 99-119, and 213-233; these read MVMA…VQSL, WIAL…VGSL, and ESTL…FIAW.

The protein belongs to the UPF0283 family.

It is found in the cell inner membrane. This is UPF0283 membrane protein ECA1987 from Pectobacterium atrosepticum (strain SCRI 1043 / ATCC BAA-672) (Erwinia carotovora subsp. atroseptica).